The sequence spans 86 residues: Cell division topological specificity factor (86 aa).

The protein belongs to the MinE family.

Functionally, prevents the cell division inhibition by proteins MinC and MinD at internal division sites while permitting inhibition at polar sites. This ensures cell division at the proper site by restricting the formation of a division septum at the midpoint of the long axis of the cell. The polypeptide is Cell division topological specificity factor (Parasynechococcus marenigrum (strain WH8102)).